A 59-amino-acid polypeptide reads, in one-letter code: Large ribosomal subunit protein bL32B (59 aa).

It belongs to the bacterial ribosomal protein bL32 family.

This chain is Large ribosomal subunit protein bL32B (rpmF2), found in Enterococcus faecalis (strain ATCC 700802 / V583).